A 613-amino-acid chain; its full sequence is DNA mismatch repair protein MutL (613 aa).

Belongs to the DNA mismatch repair MutL/HexB family.

This protein is involved in the repair of mismatches in DNA. It is required for dam-dependent methyl-directed DNA mismatch repair. May act as a 'molecular matchmaker', a protein that promotes the formation of a stable complex between two or more DNA-binding proteins in an ATP-dependent manner without itself being part of a final effector complex. The protein is DNA mismatch repair protein MutL of Flavobacterium psychrophilum (strain ATCC 49511 / DSM 21280 / CIP 103535 / JIP02/86).